A 416-amino-acid chain; its full sequence is MESRKDMVMFLDGGQLGTLVGKRVSNLSEAVSSPLPEPPEKMVPHGCLSPRAGPPTSRERGGGGQEEEPVDGLAGSAAGLGAEPRSAGAAMLGPGPPVPSADSLSGQGQPSSSDTESDFYEEIEVSCTPDCATGNAEYQHSKAPGSDALGSSPTSGSEAPKSNGGSGGSGSQGTLACSASDQMRRYRTAFTREQIARLEKEFYRENYVSRPRRCELAAALNLPETTIKVWFQNRRMKDKRQRLAMTWPHPADPAFYTYMMSHAAAAGGLPYPFPSHLPLPYYSPVGLGAASAASAAASPFSGPLRPLDTFRVLSQPYPRPELLCAFRHPPLYPGPAHGLGASAAAAAAAGPCSCLACHSGPANGLAPRAAAAAAASDFTCASTSRSDSFLTFAPSVLSKASSVAALDQREEVPLTR.

2 disordered regions span residues 30–120 and 138–178; these read AVSS…SDFY and YQHS…LACS. Positions 72–82 are enriched in low complexity; sequence GLAGSAAGLGA. Residues 102 to 114 are compositionally biased toward polar residues; the sequence is DSLSGQGQPSSSD. A DNA-binding region (homeobox) is located at residues 183–242; sequence MRRYRTAFTREQIARLEKEFYRENYVSRPRRCELAAALNLPETTIKVWFQNRRMKDKRQR.

It belongs to the even-skipped homeobox family.

The protein resides in the nucleus. Functionally, may play a role in the specification of neuronal cell types. May play a role in the dorsoventral specification of mesodermal cell fate. The sequence is that of Homeobox even-skipped homolog protein 1 (Evx1) from Mus musculus (Mouse).